We begin with the raw amino-acid sequence, 572 residues long: Galectin-3-binding protein B (572 aa).

The signal sequence occupies residues 1-14 (MLLLWPLLFLQVSA). Residues 32-131 (VRLVGVIPSS…HKEDAGVICA (100 aa)) form the SRCR domain. 3 disulfide bridges follow: C56/C120, C69/C130, and C100/C110. N-linked (GlcNAc...) asparagine glycosylation is found at N135, N195, and N202. Residues 164-231 (CDFTIAVRDL…LYTRQIDVST (68 aa)) enclose the BTB domain. The region spanning 270 to 372 (QVSMYEYGVR…IPVDKLYDIQ (103 aa)) is the BACK domain. N-linked (GlcNAc...) asparagine glycans are attached at residues N430 and N548.

The protein localises to the secreted. Its subcellular location is the extracellular space. The protein resides in the extracellular matrix. In terms of biological role, promotes integrin-mediated cell adhesion. This Danio rerio (Zebrafish) protein is Galectin-3-binding protein B (lgals3bpb).